A 475-amino-acid chain; its full sequence is Phenolic acid decarboxylase (475 aa).

Mn(2+) is bound by residues N161, H183, and E225. Residues 161 to 166 (NVGIYR) and 182 to 183 (MH) contribute to the prenylated FMN site. E274 acts as the Proton donor in catalysis.

It belongs to the UbiD family. YclC subfamily. The cofactor is prenylated FMN. Mn(2+) is required as a cofactor.

The catalysed reaction is 4-hydroxybenzoate + H(+) = phenol + CO2. It catalyses the reaction vanillate + H(+) = guaiacol + CO2. Functionally, involved in the non-oxidative decarboxylation and detoxification of phenolic derivatives under both aerobic and anaerobic conditions. Phenolic acid decarboxylase that catalyzes the reversible decarboxylation of 4-hydroxybenzoate and vanillate. The sequence is that of Phenolic acid decarboxylase from Escherichia coli O157:H7.